Reading from the N-terminus, the 622-residue chain is Modification methylase LlaI (622 aa).

The protein belongs to the N(4)/N(6)-methyltransferase family.

The catalysed reaction is a 2'-deoxyadenosine in DNA + S-adenosyl-L-methionine = an N(6)-methyl-2'-deoxyadenosine in DNA + S-adenosyl-L-homocysteine + H(+). Its function is as follows. An alpha subtype methylase that modifies unknown specific adenine residues, and protects the DNA from cleavage by the LlaI endonuclease. This chain is Modification methylase LlaI, found in Lactococcus lactis subsp. lactis (Streptococcus lactis).